The primary structure comprises 383 residues: Serine protease 23 (383 aa).

A signal peptide spans 1-19 (MAGIPGLLFLLFLLLCAVG). A glycan (N-linked (GlcNAc...) asparagine) is linked at N93. Residues 108 to 127 (SSGGGAQHRDSGSSGKSRRK) are disordered. A Phosphoserine; by FAM20C modification is found at S109. A disulfide bridge connects residues C160 and C176. The active-site Charge relay system is H175. N-linked (GlcNAc...) asparagine glycosylation is present at N207. Residues D240 and S316 each act as charge relay system in the active site.

The protein belongs to the peptidase S1 family.

Its subcellular location is the secreted. In Macaca mulatta (Rhesus macaque), this protein is Serine protease 23 (PRSS23).